The sequence spans 482 residues: Chitobiosyldiphosphodolichol beta-mannosyltransferase (482 aa).

Topologically, residues 1-2 are lumenal; sequence MA. The helical transmembrane segment at 3-23 threads the bilayer; it reads ASCVALLVLALLLLVLLLGLW. Topologically, residues 24–99 are cytoplasmic; sequence KRGRQTGRAR…DLRGLGAGPR (76 aa). An intramembrane region (helical) is located at residues 100–120; that stretch reads ILQYGVKVVFQAVYLLWKMMR. The Cytoplasmic portion of the chain corresponds to 121–482; the sequence is MDPAAYIFLQ…PCGHPSCRGF (362 aa). Phosphoserine is present on Ser242.

The protein belongs to the glycosyltransferase group 1 family. Glycosyltransferase 33 subfamily.

The protein localises to the endoplasmic reticulum membrane. It carries out the reaction an N,N'-diacetylchitobiosyl-diphospho-di-trans,poly-cis-dolichol + GDP-alpha-D-mannose = a beta-D-Man-(1-&gt;4)-beta-D-GlcNAc-(1-&gt;4)-alpha-D-GlcNAc-diphospho-di-trans,poly-cis-dolichol + GDP + H(+). It functions in the pathway protein modification; protein glycosylation. In terms of biological role, mannosyltransferase that operates in the biosynthetic pathway of dolichol-linked oligosaccharides, the glycan precursors employed in protein asparagine (N)-glycosylation. The assembly of dolichol-linked oligosaccharides begins on the cytosolic side of the endoplasmic reticulum membrane and finishes in its lumen. The sequential addition of sugars to dolichol pyrophosphate produces dolichol-linked oligosaccharides containing fourteen sugars, including two GlcNAcs, nine mannoses and three glucoses. Once assembled, the oligosaccharide is transferred from the lipid to nascent proteins by oligosaccharyltransferases. Catalyzes, on the cytoplasmic face of the endoplasmic reticulum, the addition of the first mannose residues to the dolichol-linked oligosaccharide chain, to produce Man1GlcNAc(2)-PP-dolichol core oligosaccharide. Man1GlcNAc(2)-PP-dolichol is a substrate for ALG2, the following enzyme in the biosynthetic pathway. In Mus musculus (Mouse), this protein is Chitobiosyldiphosphodolichol beta-mannosyltransferase.